Here is a 502-residue protein sequence, read N- to C-terminus: Probable cytosol aminopeptidase (502 aa).

The Mn(2+) site is built by Lys270 and Asp275. Lys282 is an active-site residue. Mn(2+)-binding residues include Asp293, Asp352, and Glu354. Arg356 is an active-site residue.

The protein belongs to the peptidase M17 family. It depends on Mn(2+) as a cofactor.

The protein resides in the cytoplasm. It carries out the reaction Release of an N-terminal amino acid, Xaa-|-Yaa-, in which Xaa is preferably Leu, but may be other amino acids including Pro although not Arg or Lys, and Yaa may be Pro. Amino acid amides and methyl esters are also readily hydrolyzed, but rates on arylamides are exceedingly low.. The enzyme catalyses Release of an N-terminal amino acid, preferentially leucine, but not glutamic or aspartic acids.. Its function is as follows. Presumably involved in the processing and regular turnover of intracellular proteins. Catalyzes the removal of unsubstituted N-terminal amino acids from various peptides. In Buchnera aphidicola subsp. Schizaphis graminum (strain Sg), this protein is Probable cytosol aminopeptidase.